Consider the following 477-residue polypeptide: Metallopeptidase AprA (477 aa).

The N-terminal stretch at 1–20 (MSKAKDKAIVSAAQASTAYS) is a signal peptide. Histidine 183 is a Zn(2+) binding site. Glutamate 184 is an active-site residue. Positions 187 and 193 each coordinate Zn(2+). Ca(2+) contacts are provided by arginine 264, glycine 266, threonine 268, aspartate 296, glycine 298, glycine 299, aspartate 301, threonine 338, glutamate 340, glycine 345, glycine 347, aspartate 349, asparagine 354, alanine 356, asparagine 358, glycine 362, glycine 363, alanine 364, glycine 365, aspartate 367, glycine 371, alanine 372, glycine 373, glycine 374, aspartate 376, glycine 380, glycine 381, alanine 382, glycine 383, aspartate 385, aspartate 394, aspartate 401, aspartate 411, aspartate 453, serine 455, and aspartate 461. Hemolysin-type calcium-binding repeat units follow at residues 343 to 360 (FGGA…ANVI), 361 to 378 (KGGA…ADQL), and 379 to 391 (WGGA…VFGA).

Belongs to the peptidase M10B family. It depends on Ca(2+) as a cofactor. Zn(2+) serves as cofactor.

Its subcellular location is the secreted. Its activity is regulated as follows. Is completely inhibited by the metal cation chelators 1,10-phenanthroline and EDTA, but PMSF, pepstatin A and E-64 have no effect on activity. Functionally, peptidase able to cleave azocasein and the milk substrates beta-casein and Na-caseinate. Can withstand UHT processing of milk, and is able to spoil UHT milk over the storage period. This Pseudomonas marginalis (Pseudomonas panacis) protein is Metallopeptidase AprA.